We begin with the raw amino-acid sequence, 473 residues long: Lactate utilization protein B (473 aa).

2 4Fe-4S ferredoxin-type domains span residues 302–332 and 351–380; these read GSEF…GHSY and YDDY…LHDL. [4Fe-4S] cluster-binding residues include Cys-311, Cys-314, Cys-317, Cys-321, Cys-364, Cys-367, and Cys-371.

Belongs to the LutB/YkgF family.

In terms of biological role, is involved in L-lactate degradation and allows cells to grow with lactate as the sole carbon source. Has probably a role as an electron transporter during oxidation of L-lactate. This chain is Lactate utilization protein B, found in Bacillus anthracis (strain A0248).